The chain runs to 668 residues: Metastasis-associated protein MTA2 (668 aa).

The 144-residue stretch at 1-144 folds into the BAH domain; that stretch reads MAANMYRVGD…PVQKTLLADQ (144 aa). Phosphoserine is present on residues S52 and S54. Residues 145–256 form the ELM2 domain; that stretch reads GEIRVGCKYQ…KAMSTLVPQG (112 aa). K152 carries the post-translational modification N6-acetyllysine. The SANT domain maps to 263–315; the sequence is DEMEEWSASEAMLFEEALEKYGKDFNDIRQDFLPWKSLASIVQFYYMWKTTDR. The GATA-type; atypical zinc finger occupies 367-394; sequence CESCHTTQSAQWYAWGPPNMQCRLCASC. Polar residues predominate over residues 409–419; sequence QLEGATRGTTE. A disordered region spans residues 409 to 437; that stretch reads QLEGATRGTTEPHSRGHLSRPEAQSLSPY. S433 and S435 each carry phosphoserine. K460 carries the post-translational modification N6-acetyllysine. K492 participates in a covalent cross-link: Glycyl lysine isopeptide (Lys-Gly) (interchain with G-Cter in SUMO2 and SUMO3); alternate. K492 participates in a covalent cross-link: Glycyl lysine isopeptide (Lys-Gly) (interchain with G-Cter in SUMO2); alternate. K508 participates in a covalent cross-link: Glycyl lysine isopeptide (Lys-Gly) (interchain with G-Cter in SUMO2). K522 and K531 each carry N6-acetyllysine. T534 is subject to Phosphothreonine. At S548 the chain carries Phosphoserine. Glycyl lysine isopeptide (Lys-Gly) (interchain with G-Cter in SUMO2) cross-links involve residues K559 and K595. Disordered stretches follow at residues 580–599 and 647–668; these read ASGI…LNPA and PPVP…VLED.

It belongs to the metastasis-associated protein family. In terms of assembly, component of the nucleosome remodeling and deacetylase (NuRD) repressor complex, composed of core proteins MTA1, MTA2, MTA3, RBBP4, RBBP7, HDAC1, HDAC2, MBD2, MBD3, and peripherally associated proteins CDK2AP1, CDK2AP2, GATAD2A, GATAD2B, CHD3, CHD4 and CHD5. The exact stoichiometry of the NuRD complex is unknown, and some subunits such as MBD2 and MBD3, GATAD2A and GATAD2B, and CHD3, CHD4 and CHD5 define mutually exclusive NuRD complexes. Interacts with CHD3. Interacts with CHD4. Interacts with GATAD2A. Interacts with HDAC7. Interacts with MBD3. Interacts with p53/TP53. Interacts with MINT. Interacts with PIMREG. Interacts with NACC2. Interacts with ERCC6. Interacts with PWWP2B. Interacts with transcription factor BCL11A. In terms of tissue distribution, widely expressed.

Its subcellular location is the nucleus. Its function is as follows. May function as a transcriptional coregulator. Acts as a component of the histone deacetylase NuRD complex which participates in the remodeling of chromatin. The chain is Metastasis-associated protein MTA2 (MTA2) from Homo sapiens (Human).